The sequence spans 155 residues: Small ribosomal subunit protein uS7 (155 aa).

Belongs to the universal ribosomal protein uS7 family. Part of the 30S ribosomal subunit. Contacts proteins S9 and S11.

In terms of biological role, one of the primary rRNA binding proteins, it binds directly to 16S rRNA where it nucleates assembly of the head domain of the 30S subunit. Is located at the subunit interface close to the decoding center, probably blocks exit of the E-site tRNA. This chain is Small ribosomal subunit protein uS7, found in Desulforapulum autotrophicum (strain ATCC 43914 / DSM 3382 / VKM B-1955 / HRM2) (Desulfobacterium autotrophicum).